A 263-amino-acid chain; its full sequence is Type III pantothenate kinase (263 aa).

Residue 6–13 (DVGNTRIK) participates in ATP binding. Residues Y92 and 99-102 (GTDR) contribute to the substrate site. The active-site Proton acceptor is the D101. Residue T124 coordinates ATP. T174 provides a ligand contact to substrate.

This sequence belongs to the type III pantothenate kinase family. In terms of assembly, homodimer. Requires NH4(+) as cofactor. The cofactor is K(+).

It is found in the cytoplasm. It carries out the reaction (R)-pantothenate + ATP = (R)-4'-phosphopantothenate + ADP + H(+). Its pathway is cofactor biosynthesis; coenzyme A biosynthesis; CoA from (R)-pantothenate: step 1/5. Functionally, catalyzes the phosphorylation of pantothenate (Pan), the first step in CoA biosynthesis. The protein is Type III pantothenate kinase of Azoarcus sp. (strain BH72).